Here is a 110-residue protein sequence, read N- to C-terminus: MSEATTTTTTTSAPRPGGRPSGPRPDRGPGGPRKKRPFQRRKVCRFCAEKDTTIDYKDPRTLRYFITERGKIVPRRISGNCSKHQREITEAIKRARNLALLPLAAGHALP.

The span at 1–18 (MSEATTTTTTTSAPRPGG) shows a compositional bias: low complexity. Residues 1-41 (MSEATTTTTTTSAPRPGGRPSGPRPDRGPGGPRKKRPFQRR) are disordered. The segment covering 32-41 (PRKKRPFQRR) has biased composition (basic residues).

Belongs to the bacterial ribosomal protein bS18 family. Part of the 30S ribosomal subunit. Forms a tight heterodimer with protein bS6.

In terms of biological role, binds as a heterodimer with protein bS6 to the central domain of the 16S rRNA, where it helps stabilize the platform of the 30S subunit. The sequence is that of Small ribosomal subunit protein bS18 from Trichlorobacter lovleyi (strain ATCC BAA-1151 / DSM 17278 / SZ) (Geobacter lovleyi).